We begin with the raw amino-acid sequence, 195 residues long: Interferon tau-8 (195 aa).

A signal peptide spans 1–23; sequence MAFVLSLLMALVLVSYGPGGSLG. Disulfide bonds link Cys-24-Cys-122 and Cys-52-Cys-162.

Belongs to the alpha/beta interferon family. IFN-alphaII subfamily. As to expression, constitutively and exclusively expressed in the mononuclear cells of the extraembryonic trophectoderm.

Its subcellular location is the secreted. Functionally, paracrine hormone primarily responsible for maternal recognition of pregnancy. Interacts with endometrial receptors, probably type I interferon receptors, and blocks estrogen receptor expression, preventing the estrogen-induced increase in oxytocin receptor expression in the endometrium. This results in the suppression of the pulsatile endometrial release of the luteolytic hormone prostaglandin F2-alpha, hindering the regression of the corpus luteum (luteolysis) and therefore a return to ovarian cyclicity. This, and a possible direct effect of IFN-tau on prostaglandin synthesis, leads in turn to continued ovarian progesterone secretion, which stimulates the secretion by the endometrium of the nutrients required for the growth of the conceptus. In summary, displays particularly high antiviral and antiproliferative potency concurrently with particular weak cytotoxicity, high antiluteolytic activity and immunomodulatory properties. In contrast with other IFNs, IFN-tau is not virally inducible. This is Interferon tau-8 (IFNT8) from Ovis aries (Sheep).